A 61-amino-acid polypeptide reads, in one-letter code: ATP synthase subunit J, mitochondrial (61 aa).

A helical membrane pass occupies residues 13–32 (LVKYYWPFFVGFGLTFYGVA).

In terms of assembly, F-type ATP synthases have 2 components, the catalytic core F(1) and the membrane-embedded component F(0), linked together by a central stalk and a peripheral stalk. The central stalk, also called rotor shaft, is often seen as part of F(1). The peripheral stalk is seen as part of F(0). F(0) contains the membrane channel next to the rotor. F-type ATP synthases form dimers but each monomer functions independently in ATP generation. The dimer consists of 18 different polypeptides: ATP1 (subunit alpha, part of F(1), 3 molecules per monomer), ATP2 (subunit beta, part of F(1), 3 molecules per monomer), ATP3 (subunit gamma, part of the central stalk), ATP4 (subunit b, part of the peripheral stalk), ATP5/OSCP (subunit 5/OSCP, part of the peripheral stalk), ATP6 (subunit a, part of the peripheral stalk), ATP7 (subunit d, part of the peripheral stalk), ATP8 (subunit 8, part of the peripheral stalk), OLI1 (subunit c, part of the rotor, 10 molecules per monomer), ATP14 (subunit h, part of the peripheral stalk), ATP15 (subunit epsilon, part of the central stalk), ATP16 (subunit delta, part of the central stalk), ATP17 (subunit f, part of the peripheral stalk), ATP18 (subunit i/j, part of the peripheral stalk). Dimer-specific subunits are ATP19 (subunit k, at interface between monomers), ATP20 (subunit g, at interface between monomers), TIM11 (subunit e, at interface between monomers). Also contains subunit L.

The protein localises to the mitochondrion inner membrane. Functionally, mitochondrial membrane ATP synthase (F(1)F(0) ATP synthase or Complex V) produces ATP from ADP in the presence of a proton gradient across the membrane which is generated by electron transport complexes of the respiratory chain. F-type ATP synthases consist of two structural domains, F(1) - containing the extramembraneous catalytic core, and F(0) - containing the membrane proton channel, linked together by a central stalk and a peripheral stalk. During catalysis, ATP synthesis in the catalytic domain of F(1) is coupled via a rotary mechanism of the central stalk subunits to proton translocation. Part of the complex F(0) domain. Minor subunit located with subunit a/ATP6 in the membrane. The chain is ATP synthase subunit J, mitochondrial from Pichia angusta (Yeast).